Here is a 161-residue protein sequence, read N- to C-terminus: Cytochrome c-type biogenesis protein CcmE (161 aa).

Residues methionine 1–arginine 8 are Cytoplasmic-facing. Residues leucine 9–alanine 29 traverse the membrane as a helical; Signal-anchor for type II membrane protein segment. Topologically, residues leucine 30–glutamate 161 are periplasmic. 2 residues coordinate heme: histidine 129 and tyrosine 133. The tract at residues methionine 142–glutamate 161 is disordered. A compositionally biased stretch (polar residues) spans glutamine 150–glutamate 161.

This sequence belongs to the CcmE/CycJ family.

The protein localises to the cell inner membrane. In terms of biological role, heme chaperone required for the biogenesis of c-type cytochromes. Transiently binds heme delivered by CcmC and transfers the heme to apo-cytochromes in a process facilitated by CcmF and CcmH. In Vibrio parahaemolyticus serotype O3:K6 (strain RIMD 2210633), this protein is Cytochrome c-type biogenesis protein CcmE.